Reading from the N-terminus, the 412-residue chain is Alpha-ketoglutarate-dependent sulfonate dioxygenase (412 aa).

Position 52 is a phosphoserine (Ser52). Residues His218 and Asp220 each coordinate Fe cation. Residues Thr245 and Trp352 each coordinate 2-oxoglutarate. His367 is a binding site for Fe cation. The 2-oxoglutarate site is built by Arg379 and Arg383.

The protein belongs to the TfdA dioxygenase family. Fe(2+) serves as cofactor.

It participates in organosulfur degradation; alkanesulfonate degradation. Functionally, acts as an alpha-ketoglutarate-dependent dioxygenase active on sulfonates. Although taurine is a poor substrate, a variety of other sulfonates are utilized, with the best natural substrates being isethionate and taurocholate. The polypeptide is Alpha-ketoglutarate-dependent sulfonate dioxygenase (JLP1) (Saccharomyces cerevisiae (strain ATCC 204508 / S288c) (Baker's yeast)).